We begin with the raw amino-acid sequence, 348 residues long: Chloroacetanilide N-alkylformylase, oxygenase component (348 aa).

Residues 7-108 enclose the Rieske domain; that stretch reads WYAVAWCDEV…ARERHKLIWA (102 aa). The [2Fe-2S] cluster site is built by cysteine 47, histidine 49, cysteine 66, and histidine 69. Fe cation contacts are provided by histidine 159 and histidine 164. Histidine 250 lines the substrate pocket. Aspartate 293 provides a ligand contact to Fe cation.

The chloroacetanilide N-alkylformylase multicomponent enzyme system is composed of an oxygenase component (CndA) and an electron transfer component formed by a ferredoxin reductase (CndC1) and a ferredoxin (CndB1). In vitro, chloroacetanilide N-alkylformylase assays in which CndB1 is substituted for CndB2 demonstrate that the two enzymes possess nearly identical activities. [2Fe-2S] cluster serves as cofactor.

It carries out the reaction butachlor + 2 reduced [2Fe-2S]-[ferredoxin] + O2 + 2 H(+) = butyl formate + N-(2,6-diethylphenyl)-2-chloroacetamide + 2 oxidized [2Fe-2S]-[ferredoxin] + H2O. The catalysed reaction is alachlor + 2 reduced [2Fe-2S]-[ferredoxin] + O2 + 2 H(+) = methyl formate + N-(2,6-diethylphenyl)-2-chloroacetamide + 2 oxidized [2Fe-2S]-[ferredoxin] + H2O. It catalyses the reaction acetochlor + 2 reduced [2Fe-2S]-[ferredoxin] + O2 + 2 H(+) = N-(2-ethyl-6-methylphenyl)-2-chloroacetamide + ethyl formate + 2 oxidized [2Fe-2S]-[ferredoxin] + H2O. Activity enhanced by Fe(2+) and Mg(2+) ions. Divalent cations such as Ca(2+), Cr(2+), Co(2+), and Mn(2+) show moderate inhibition of the enzyme, whereas heavy metal ions such as Ag(+), Cu(2+), Pb(2+), Hg(2+), Ni(2+) and Zn(2+) severely inhibit the activity. Component of the chloroacetanilide N-alkylformylase multicomponent enzyme system involved in the degradation of chloroacetanilide herbicides (N-alkoxyalkyl-N-chloroacetyl-substituted aniline derivatives). In vitro, catalyzes the N-dealkylation of butachlor, alachlor and acetochlor to yield 2-chloro-N-(2,6-diethylphenyl)acetamide (CDEPA) (for alachlor and butachlor) and 2-chloro-N-(2-methyl-6-ethylphenyl)acetamide (CMEPA) (for acetochlor). This Rhizorhabdus wittichii (strain DC-6 / KACC 16600) (Sphingomonas wittichii) protein is Chloroacetanilide N-alkylformylase, oxygenase component.